A 290-amino-acid chain; its full sequence is 4-diphosphocytidyl-2-C-methyl-D-erythritol kinase (290 aa).

Lys10 is an active-site residue. Position 96–106 (96–106 (PIAAGLGGGSS)) interacts with ATP. Residue Asp138 is part of the active site.

This sequence belongs to the GHMP kinase family. IspE subfamily.

It catalyses the reaction 4-CDP-2-C-methyl-D-erythritol + ATP = 4-CDP-2-C-methyl-D-erythritol 2-phosphate + ADP + H(+). It functions in the pathway isoprenoid biosynthesis; isopentenyl diphosphate biosynthesis via DXP pathway; isopentenyl diphosphate from 1-deoxy-D-xylulose 5-phosphate: step 3/6. Its function is as follows. Catalyzes the phosphorylation of the position 2 hydroxy group of 4-diphosphocytidyl-2C-methyl-D-erythritol. The chain is 4-diphosphocytidyl-2-C-methyl-D-erythritol kinase from Caulobacter vibrioides (strain NA1000 / CB15N) (Caulobacter crescentus).